Reading from the N-terminus, the 98-residue chain is Aspartyl/glutamyl-tRNA(Asn/Gln) amidotransferase subunit C (98 aa).

It belongs to the GatC family. In terms of assembly, heterotrimer of A, B and C subunits.

It catalyses the reaction L-glutamyl-tRNA(Gln) + L-glutamine + ATP + H2O = L-glutaminyl-tRNA(Gln) + L-glutamate + ADP + phosphate + H(+). The catalysed reaction is L-aspartyl-tRNA(Asn) + L-glutamine + ATP + H2O = L-asparaginyl-tRNA(Asn) + L-glutamate + ADP + phosphate + 2 H(+). Its function is as follows. Allows the formation of correctly charged Asn-tRNA(Asn) or Gln-tRNA(Gln) through the transamidation of misacylated Asp-tRNA(Asn) or Glu-tRNA(Gln) in organisms which lack either or both of asparaginyl-tRNA or glutaminyl-tRNA synthetases. The reaction takes place in the presence of glutamine and ATP through an activated phospho-Asp-tRNA(Asn) or phospho-Glu-tRNA(Gln). This chain is Aspartyl/glutamyl-tRNA(Asn/Gln) amidotransferase subunit C, found in Paenarthrobacter aurescens (strain TC1).